The following is a 96-amino-acid chain: UPF0235 protein CKO_04329 (96 aa).

It belongs to the UPF0235 family.

The polypeptide is UPF0235 protein CKO_04329 (Citrobacter koseri (strain ATCC BAA-895 / CDC 4225-83 / SGSC4696)).